Consider the following 192-residue polypeptide: Pyridoxal 5'-phosphate synthase subunit PdxT (192 aa).

L-glutamine is bound at residue 47-49 (GES). Residue Cys-78 is the Nucleophile of the active site. Residues Arg-105 and 139 to 140 (IR) each bind L-glutamine. Residues His-175 and Glu-177 each act as charge relay system in the active site.

It belongs to the glutaminase PdxT/SNO family. As to quaternary structure, in the presence of PdxS, forms a dodecamer of heterodimers. Only shows activity in the heterodimer.

It catalyses the reaction aldehydo-D-ribose 5-phosphate + D-glyceraldehyde 3-phosphate + L-glutamine = pyridoxal 5'-phosphate + L-glutamate + phosphate + 3 H2O + H(+). The enzyme catalyses L-glutamine + H2O = L-glutamate + NH4(+). It functions in the pathway cofactor biosynthesis; pyridoxal 5'-phosphate biosynthesis. Catalyzes the hydrolysis of glutamine to glutamate and ammonia as part of the biosynthesis of pyridoxal 5'-phosphate. The resulting ammonia molecule is channeled to the active site of PdxS. The sequence is that of Pyridoxal 5'-phosphate synthase subunit PdxT from Solibacter usitatus (strain Ellin6076).